Reading from the N-terminus, the 428-residue chain is Histone deacetylase 3 (428 aa).

The histone deacetylase stretch occupies residues 3–316; that stretch reads KTVAYFYDPD…WTYETSLLVD (314 aa). 1D-myo-inositol 1,4,5,6-tetrakisphosphate is bound by residues His-17, Gly-21, and Lys-25. Residue His-135 is part of the active site. Asp-170, His-172, and Asp-259 together coordinate Zn(2+). Residue Arg-265 participates in 1D-myo-inositol 1,4,5,6-tetrakisphosphate binding. A disordered region spans residues 385-428; the sequence is LSYDRTDEPDPEERGSEENYSRPEAANEFYDGDHDNDKESDVEI. Basic and acidic residues-rich tracts occupy residues 386-405 and 415-428; these read SYDR…ENYS and DGDH…DVEI.

The protein belongs to the histone deacetylase family. HD type 1 subfamily.

Its subcellular location is the nucleus. The protein resides in the chromosome. It localises to the cytoplasm. The protein localises to the cytosol. It catalyses the reaction N(6)-acetyl-L-lysyl-[histone] + H2O = L-lysyl-[histone] + acetate. The catalysed reaction is N(6)-acetyl-L-lysyl-[protein] + H2O = L-lysyl-[protein] + acetate. The enzyme catalyses N(6)-(2E)-butenoyl-L-lysyl-[protein] + H2O = (2E)-2-butenoate + L-lysyl-[protein]. It carries out the reaction N(6)-(2-hydroxyisobutanoyl)-L-lysyl-[protein] + H2O = 2-hydroxy-2-methylpropanoate + L-lysyl-[protein]. It catalyses the reaction N(6)-[(S)-lactoyl]-L-lysyl-[protein] + H2O = (S)-lactate + L-lysyl-[protein]. Its activity is regulated as follows. Inositol tetraphosphate (1D-myo-inositol 1,4,5,6-tetrakisphosphate) promotes the histone deacetylase activity by acting as an intermolecular glue between HDAC3 and N-Cor repressor complex components. Its function is as follows. Histone deacetylase that catalyzes the deacetylation of lysine residues on the N-terminal part of the core histones (H2A, H2B, H3 and H4), and some other non-histone substrates. Histone deacetylation gives a tag for epigenetic repression and plays an important role in transcriptional regulation, cell cycle progression and developmental events. Histone deacetylases act via the formation of large multiprotein complexes, such as N-Cor repressor complex, which activate the histone deacetylase activity. Participates in the BCL6 transcriptional repressor activity by deacetylating the H3 'Lys-27' (H3K27) on enhancer elements, antagonizing EP300 acetyltransferase activity and repressing proximal gene expression. Also functions as a deacetylase for non-histone targets. In addition to protein deacetylase activity, also acts as a protein-lysine deacylase by recognizing other acyl groups: catalyzes removal of (2E)-butenoyl (crotonyl), lactoyl (lactyl) and 2-hydroxyisobutanoyl (2-hydroxyisobutyryl) acyl groups from lysine residues, leading to protein decrotonylation, delactylation and de-2-hydroxyisobutyrylation, respectively. The chain is Histone deacetylase 3 (HDAC3) from Gallus gallus (Chicken).